The primary structure comprises 392 residues: 23S rRNA (uracil(747)-C(5))-methyltransferase RlmC (392 aa).

Residues Cys4, Cys12, Cys15, and Cys93 each contribute to the [4Fe-4S] cluster site. S-adenosyl-L-methionine is bound by residues Gln218, Phe247, Glu275, and Asn321. Residue Cys348 is the Nucleophile of the active site.

It belongs to the class I-like SAM-binding methyltransferase superfamily. RNA M5U methyltransferase family. RlmC subfamily.

It carries out the reaction uridine(747) in 23S rRNA + S-adenosyl-L-methionine = 5-methyluridine(747) in 23S rRNA + S-adenosyl-L-homocysteine + H(+). Its function is as follows. Catalyzes the formation of 5-methyl-uridine at position 747 (m5U747) in 23S rRNA. The protein is 23S rRNA (uracil(747)-C(5))-methyltransferase RlmC of Haemophilus influenzae (strain ATCC 51907 / DSM 11121 / KW20 / Rd).